Reading from the N-terminus, the 160-residue chain is NADH-quinone oxidoreductase subunit B (160 aa).

The [4Fe-4S] cluster site is built by Cys37, Cys38, Cys102, and Cys132.

It belongs to the complex I 20 kDa subunit family. As to quaternary structure, NDH-1 is composed of 14 different subunits. Subunits NuoB, C, D, E, F, and G constitute the peripheral sector of the complex. [4Fe-4S] cluster is required as a cofactor.

It localises to the cell inner membrane. It carries out the reaction a quinone + NADH + 5 H(+)(in) = a quinol + NAD(+) + 4 H(+)(out). In terms of biological role, NDH-1 shuttles electrons from NADH, via FMN and iron-sulfur (Fe-S) centers, to quinones in the respiratory chain. Couples the redox reaction to proton translocation (for every two electrons transferred, four hydrogen ions are translocated across the cytoplasmic membrane), and thus conserves the redox energy in a proton gradient. This Cupriavidus pinatubonensis (strain JMP 134 / LMG 1197) (Cupriavidus necator (strain JMP 134)) protein is NADH-quinone oxidoreductase subunit B.